A 463-amino-acid polypeptide reads, in one-letter code: Ribosomal protein uS12 methylthiotransferase RimO (463 aa).

Positions 15 to 130 (PKVGMVSLGC…VMQAVHSHLP (116 aa)) constitute an MTTase N-terminal domain. 6 residues coordinate [4Fe-4S] cluster: C24, C60, C89, C161, C165, and C168. One can recognise a Radical SAM core domain in the interval 147 to 392 (LTPRHYAYLK…MEVAEEVSAA (246 aa)). Positions 395 to 463 (ARKIGKTLKV…ADSHDLWGEV (69 aa)) constitute a TRAM domain.

Belongs to the methylthiotransferase family. RimO subfamily. The cofactor is [4Fe-4S] cluster.

It localises to the cytoplasm. The catalysed reaction is L-aspartate(89)-[ribosomal protein uS12]-hydrogen + (sulfur carrier)-SH + AH2 + 2 S-adenosyl-L-methionine = 3-methylsulfanyl-L-aspartate(89)-[ribosomal protein uS12]-hydrogen + (sulfur carrier)-H + 5'-deoxyadenosine + L-methionine + A + S-adenosyl-L-homocysteine + 2 H(+). Functionally, catalyzes the methylthiolation of an aspartic acid residue of ribosomal protein uS12. In Burkholderia pseudomallei (strain 668), this protein is Ribosomal protein uS12 methylthiotransferase RimO.